A 240-amino-acid polypeptide reads, in one-letter code: Phosphoribosylaminoimidazole-succinocarboxamide synthase (240 aa).

The protein belongs to the SAICAR synthetase family.

The catalysed reaction is 5-amino-1-(5-phospho-D-ribosyl)imidazole-4-carboxylate + L-aspartate + ATP = (2S)-2-[5-amino-1-(5-phospho-beta-D-ribosyl)imidazole-4-carboxamido]succinate + ADP + phosphate + 2 H(+). Its pathway is purine metabolism; IMP biosynthesis via de novo pathway; 5-amino-1-(5-phospho-D-ribosyl)imidazole-4-carboxamide from 5-amino-1-(5-phospho-D-ribosyl)imidazole-4-carboxylate: step 1/2. This is Phosphoribosylaminoimidazole-succinocarboxamide synthase from Coxiella burnetii (strain RSA 493 / Nine Mile phase I).